The primary structure comprises 346 residues: DNA primase small subunit PriS (346 aa).

Catalysis depends on residues D97, D99, and D278.

Belongs to the eukaryotic-type primase small subunit family. As to quaternary structure, heterodimer of a small subunit (PriS) and a large subunit (PriL). It depends on Mg(2+) as a cofactor. The cofactor is Mn(2+).

In terms of biological role, catalytic subunit of DNA primase, an RNA polymerase that catalyzes the synthesis of short RNA molecules used as primers for DNA polymerase during DNA replication. The small subunit contains the primase catalytic core and has DNA synthesis activity on its own. Binding to the large subunit stabilizes and modulates the activity, increasing the rate of DNA synthesis while decreasing the length of the DNA fragments, and conferring RNA synthesis capability. The DNA polymerase activity may enable DNA primase to also catalyze primer extension after primer synthesis. May also play a role in DNA repair. This Thermococcus onnurineus (strain NA1) protein is DNA primase small subunit PriS.